An 874-amino-acid chain; its full sequence is Leucine--tRNA ligase (874 aa).

The short motif at 47–57 is the 'HIGH' region element; sequence PYPSGKLHMGH. The short motif at 636–640 is the 'KMSKS' region element; sequence KMSKS. Residue lysine 639 coordinates ATP.

The protein belongs to the class-I aminoacyl-tRNA synthetase family.

The protein localises to the cytoplasm. It carries out the reaction tRNA(Leu) + L-leucine + ATP = L-leucyl-tRNA(Leu) + AMP + diphosphate. The chain is Leucine--tRNA ligase from Acinetobacter baumannii (strain AB307-0294).